Reading from the N-terminus, the 283-residue chain is Phosphatidylglycerol--prolipoprotein diacylglyceryl transferase (283 aa).

4 helical membrane passes run 20-40 (IGGF…IIGL), 60-80 (LVIW…VAFE), 94-114 (IWQG…AILV), and 121-141 (LSFW…QAIG). Arginine 142 contacts a 1,2-diacyl-sn-glycero-3-phospho-(1'-sn-glycerol). 3 consecutive transmembrane segments (helical) span residues 183–203 (FLYE…LFFY), 214–234 (GTIT…IEGL), and 248–268 (QVVS…LYLL).

It belongs to the Lgt family.

Its subcellular location is the cell inner membrane. It carries out the reaction L-cysteinyl-[prolipoprotein] + a 1,2-diacyl-sn-glycero-3-phospho-(1'-sn-glycerol) = an S-1,2-diacyl-sn-glyceryl-L-cysteinyl-[prolipoprotein] + sn-glycerol 1-phosphate + H(+). It participates in protein modification; lipoprotein biosynthesis (diacylglyceryl transfer). Catalyzes the transfer of the diacylglyceryl group from phosphatidylglycerol to the sulfhydryl group of the N-terminal cysteine of a prolipoprotein, the first step in the formation of mature lipoproteins. In Synechocystis sp. (strain ATCC 27184 / PCC 6803 / Kazusa), this protein is Phosphatidylglycerol--prolipoprotein diacylglyceryl transferase.